Reading from the N-terminus, the 71-residue chain is General transcription and DNA repair factor IIH subunit TFB5 (71 aa).

Belongs to the TFB5 family. In terms of assembly, component of the 7-subunit TFIIH core complex.

It localises to the nucleus. The protein resides in the chromosome. Its function is as follows. Component of the general transcription and DNA repair factor IIH (TFIIH) core complex, which is involved in general and transcription-coupled nucleotide excision repair (NER) of damaged DNA and in RNA transcription by RNA polymerase II. In NER, TFIIH acts by opening DNA around the lesion to allow the excision of the damaged oligonucleotide and its replacement by a new DNA fragment. In transcription, TFIIH has an essential role in transcription initiation. When the pre-initiation complex (PIC) has been established, TFIIH is required for promoter opening and promoter escape. Necessary for the stability of the TFIIH complex and for the presence of normal levels of TFIIH in the cell. Required for efficient binding of TFIIH to damaged DNA. Dispensable for normal development, but required when transcription is challenged. The sequence is that of General transcription and DNA repair factor IIH subunit TFB5 from Caenorhabditis elegans.